A 629-amino-acid chain; its full sequence is tRNA uridine 5-carboxymethylaminomethyl modification enzyme MnmG (629 aa).

Residues 15 to 20 (GAGHAG), Val127, and Ser182 contribute to the FAD site. Residues 203 to 227 (TPPRVKSSTIDYSKTEEQPGDDHPR) are disordered. The segment covering 215-227 (SKTEEQPGDDHPR) has biased composition (basic and acidic residues). 274 to 288 (GARYCPSIEDKIVRF) serves as a coordination point for NAD(+). Residue Gln371 participates in FAD binding.

The protein belongs to the MnmG family. As to quaternary structure, homodimer. Heterotetramer of two MnmE and two MnmG subunits. FAD serves as cofactor.

Its subcellular location is the cytoplasm. NAD-binding protein involved in the addition of a carboxymethylaminomethyl (cmnm) group at the wobble position (U34) of certain tRNAs, forming tRNA-cmnm(5)s(2)U34. This chain is tRNA uridine 5-carboxymethylaminomethyl modification enzyme MnmG, found in Listeria welshimeri serovar 6b (strain ATCC 35897 / DSM 20650 / CCUG 15529 / CIP 8149 / NCTC 11857 / SLCC 5334 / V8).